Reading from the N-terminus, the 159-residue chain is Mitotic-spindle organizing protein 2 (159 aa).

The tract at residues 87–159 (LASDPQDSVP…SGKSNSRSSP (73 aa)) is disordered. Positions 91–105 (PQDSVPISLSTSTSE) are enriched in polar residues. Omega-N-methylarginine is present on Arg111. Ser153 is modified (phosphoserine).

It belongs to the MOZART2 family. As to quaternary structure, associates with the gamma-tubulin ring complex (gTuRC) consisting of TUBGCP2, TUBGCP3, TUBGCP4, TUBGCP5 and TUBGCP6 and gamma-tubulin TUBG1 or TUBG2; within the complex, interacts with TUBGCP2; the interaction plays a role in gTuRC activation.

The protein resides in the cytoplasm. Its subcellular location is the cytoskeleton. The protein localises to the microtubule organizing center. It is found in the centrosome. It localises to the spindle. In terms of biological role, required for the recruitment and the assembly of the gamma-tubulin ring complex (gTuRC) at the centrosome. The gTuRC regulates the minus-end nucleation of alpha-beta tubulin heterodimers that grow into microtubule protafilaments, a critical step in centrosome duplication and spindle formation. The polypeptide is Mitotic-spindle organizing protein 2 (Mzt2) (Mus musculus (Mouse)).